A 309-amino-acid polypeptide reads, in one-letter code: MPIRIPDALPAVNFLRNENVFVMTDSRAAVQEIRPLKVLLLNLMPKKIETENQFLRLLSNSPLQIDIQLLRIDRRESKNTPMEHLNNFYCHFEDIQQENFDGLVVTGAPLGQVDFGDVAYWSQIVQVIEWARAHVTSTLFVCWAAQAALNILYGLPKMTRAQKLSGVYEHQTLNPLALLTRGFDEGFLAPHSRYADFPPQAIREHTDLQIFAESAQAGAYLFASVDKRTVFVTGHPEYDAHTLGAEYWRDLHAGLTPALPFNYFPQDNSDGTPLATWRSHGHLLFSNWLNYCVYQITPYDLRQMNPTLE.

Residue C142 is the Acyl-thioester intermediate of the active site. Positions 163 and 192 each coordinate substrate. H235 (proton acceptor) is an active-site residue. E237 is an active-site residue. R249 is a binding site for substrate.

The protein belongs to the MetA family.

It is found in the cytoplasm. It catalyses the reaction L-homoserine + succinyl-CoA = O-succinyl-L-homoserine + CoA. It participates in amino-acid biosynthesis; L-methionine biosynthesis via de novo pathway; O-succinyl-L-homoserine from L-homoserine: step 1/1. Transfers a succinyl group from succinyl-CoA to L-homoserine, forming succinyl-L-homoserine. The polypeptide is Homoserine O-succinyltransferase (Edwardsiella ictaluri (strain 93-146)).